The following is a 495-amino-acid chain: F(420)H(2) dehydrogenase subunit M (495 aa).

The next 15 helical transmembrane spans lie at 1–21 (MLPVASLLILVPLIFAVVTFF), 27–47 (LAAGFGFLGSLATLGLTLYAY), 57–77 (MQFYESVSWIPFLGVNYSVGI), 80–100 (VSMPLILLNAIVIPFMILFTW), 108–128 (NRFYGLILTMQAAVIGVFVAL), 130–150 (FVVFYIFWELTLVPLFFIVNL), 163–183 (FFIYTHVASLVMLLGIFGLFY), 215–235 (IFLAILFGFLAKLPAFPFHSW), 249–269 (ILFILLKIGGYGLFRISLPML), 277–297 (LMIMILGLLGSVSILYGALLA), 315–335 (MGYVILGSAGLVTLSVSGAMF), 338–358 (FSHGLIMSIMFMSAGAIQTAA), 378–398 (VAMMVGFMASLGLPGLTGFIA), 412–432 (VFVVIALLAIVVTAGYHLWAM), and 450–470 (INSIQVFSMAVIALLVLYFGL).

The protein belongs to the complex I subunit 4 family. In terms of assembly, the FPO complex is composed of at least 13 different subunits. FpoA, FpoH, FpoJ, FpoK, FpoL, FpoM and FpoN proteins constitute the membrane sector of the complex.

The protein localises to the cell membrane. It carries out the reaction methanophenazine + reduced coenzyme F420-(gamma-L-Glu)(n) = dihydromethanophenazine + oxidized coenzyme F420-(gamma-L-Glu)(n) + H(+). Functionally, component of the F(420)H(2) dehydrogenase (FPO complex) which is part of the energy-conserving F(420)H(2):heterodisulfide oxidoreductase system. The membrane-bound electron transfer system of the complex plays an important role in the metabolism of methylotrophic methanogens when the organisms grow on methanol or methylamines. Catalyzes the oxidation of methanophenazine to dihydromethanophenazine. It shuttles electrons from F(420)H(2), via FAD and iron-sulfur (Fe-S) centers, to methanophenazine (an electron carrier in the membrane). It couples the redox reaction to proton translocation (for every two electrons transferred, two hydrogen ions are translocated across the cytoplasmic membrane), and thus conserves the redox energy in a proton gradient. It also catalyzes the oxidation of F(420)H(2) with quinones such as 2,3-dimethyl-1,4-naphthoquinone, 2-methyl-1,4-naphthoquinone and tetramethyl-p-benzoquinone. The polypeptide is F(420)H(2) dehydrogenase subunit M (fpoM) (Methanosarcina mazei (strain ATCC BAA-159 / DSM 3647 / Goe1 / Go1 / JCM 11833 / OCM 88) (Methanosarcina frisia)).